The chain runs to 166 residues: Polyadenylate-binding protein 2 (166 aa).

One can recognise an RRM domain in the interval 55-132 (QSVYVGNVDY…RPLKVTPKRT (78 aa)). The segment at 129 to 166 (PKRTNVPGMSRGRGRGRGRGRGRGRGGYRGRARGFAPY) is disordered. The span at 140–160 (GRGRGRGRGRGRGRGGYRGRA) shows a compositional bias: basic residues.

Its subcellular location is the nucleus. In Schizosaccharomyces pombe (strain 972 / ATCC 24843) (Fission yeast), this protein is Polyadenylate-binding protein 2 (pab2).